The following is a 261-amino-acid chain: Cytochrome c oxidase subunit 3 (261 aa).

Residues 1 to 15 lie on the Mitochondrial matrix side of the membrane; the sequence is MSHQAHAYHMVDPSP. Residues 16-34 form a helical membrane-spanning segment; that stretch reads WPLTGAGAALLMTSGLAMW. Residues 35 to 40 lie on the Mitochondrial intermembrane side of the membrane; it reads FHKNSC. Residues 41-66 form a helical membrane-spanning segment; the sequence is ILMTLGLILMLLTMYQWWRDIVREGT. The Mitochondrial matrix segment spans residues 67–72; sequence FLGHHT. Residues 73-105 traverse the membrane as a helical segment; that stretch reads SPVQQGLRYGMILFIISEVCFFAGFFWAFYHAS. Residues 106–128 are Mitochondrial intermembrane-facing; the sequence is LAPTPELGLTWPPTGINPLNPFE. The chain crosses the membrane as a helical span at residues 129–152; it reads VPLLNTAVLLASGVSVTWAHHSIT. Over 153–155 the chain is Mitochondrial matrix; it reads EKN. The chain crosses the membrane as a helical span at residues 156–183; that stretch reads RTETTQALTLTVLLGLYFTALQIMEYYE. Residues 184-190 are Mitochondrial intermembrane-facing; sequence TPFTMAD. Residues 191–223 traverse the membrane as a helical segment; the sequence is GVYGSTFFVATGFHGLHVIIGSLFLLTCLLRHL. Residues 224–232 lie on the Mitochondrial matrix side of the membrane; the sequence is QYHFTSKHH. A helical transmembrane segment spans residues 233–256; that stretch reads FGFEAAAWYWHFVDVVWLFLYISI. The Mitochondrial intermembrane segment spans residues 257 to 261; it reads YWWGS.

It belongs to the cytochrome c oxidase subunit 3 family. As to quaternary structure, component of the cytochrome c oxidase (complex IV, CIV), a multisubunit enzyme composed of 14 subunits. The complex is composed of a catalytic core of 3 subunits MT-CO1, MT-CO2 and MT-CO3, encoded in the mitochondrial DNA, and 11 supernumerary subunits COX4I, COX5A, COX5B, COX6A, COX6B, COX6C, COX7A, COX7B, COX7C, COX8 and NDUFA4, which are encoded in the nuclear genome. The complex exists as a monomer or a dimer and forms supercomplexes (SCs) in the inner mitochondrial membrane with NADH-ubiquinone oxidoreductase (complex I, CI) and ubiquinol-cytochrome c oxidoreductase (cytochrome b-c1 complex, complex III, CIII), resulting in different assemblies (supercomplex SCI(1)III(2)IV(1) and megacomplex MCI(2)III(2)IV(2)).

The protein localises to the mitochondrion inner membrane. The catalysed reaction is 4 Fe(II)-[cytochrome c] + O2 + 8 H(+)(in) = 4 Fe(III)-[cytochrome c] + 2 H2O + 4 H(+)(out). Component of the cytochrome c oxidase, the last enzyme in the mitochondrial electron transport chain which drives oxidative phosphorylation. The respiratory chain contains 3 multisubunit complexes succinate dehydrogenase (complex II, CII), ubiquinol-cytochrome c oxidoreductase (cytochrome b-c1 complex, complex III, CIII) and cytochrome c oxidase (complex IV, CIV), that cooperate to transfer electrons derived from NADH and succinate to molecular oxygen, creating an electrochemical gradient over the inner membrane that drives transmembrane transport and the ATP synthase. Cytochrome c oxidase is the component of the respiratory chain that catalyzes the reduction of oxygen to water. Electrons originating from reduced cytochrome c in the intermembrane space (IMS) are transferred via the dinuclear copper A center (CU(A)) of subunit 2 and heme A of subunit 1 to the active site in subunit 1, a binuclear center (BNC) formed by heme A3 and copper B (CU(B)). The BNC reduces molecular oxygen to 2 water molecules using 4 electrons from cytochrome c in the IMS and 4 protons from the mitochondrial matrix. The sequence is that of Cytochrome c oxidase subunit 3 (MT-CO3) from Petromyzon marinus (Sea lamprey).